We begin with the raw amino-acid sequence, 124 residues long: Small ribosomal subunit protein uS12 (124 aa).

A disordered region spans residues 1 to 26; sequence MPTISQLVGSERKRLTKKTKSPALKA. D89 is subject to 3-methylthioaspartic acid. The segment at 104 to 124 is disordered; that stretch reads TAGVKDRRQSRSKYGAKAPKD.

This sequence belongs to the universal ribosomal protein uS12 family. Part of the 30S ribosomal subunit. Contacts proteins S8 and S17. May interact with IF1 in the 30S initiation complex.

Functionally, with S4 and S5 plays an important role in translational accuracy. In terms of biological role, interacts with and stabilizes bases of the 16S rRNA that are involved in tRNA selection in the A site and with the mRNA backbone. Located at the interface of the 30S and 50S subunits, it traverses the body of the 30S subunit contacting proteins on the other side and probably holding the rRNA structure together. The combined cluster of proteins S8, S12 and S17 appears to hold together the shoulder and platform of the 30S subunit. The protein is Small ribosomal subunit protein uS12 of Prochlorococcus marinus (strain MIT 9215).